A 501-amino-acid chain; its full sequence is MAVPGSSRRQPSNRGLVSHCTHHHIVVFLLTFFSYSLLHASRKTFSNVKVSISSQWTPSCLNSTTFELRPNELWNSNHLFPNAEEATLFLGTLDTIFLFSYAVGLFVSGIVGDRLNLRWVLSFGMCSSALVVFFFGTLTEWLHFYNKWFYCCLWVVNGLLQSTGWPCVVAVMGNWFGKAGRGFVFGLWSACASVGNILGAFLASCVLKYGYEYAFLVTASVQFAGGVIVFCGLLTSPKEVGLPELGADEEGSVEEDANRPLMGDDDADDDEGNYSIQAADTDSQPKAIGFFQACCLPGVVLYSLAYACLKLVNYSFFFWLPFYLSNNFGWKEAEADQLSIWYDVGGIIGGTIQGLISDVLQKRAPVLAISLLFAVGSLFGYSRSPNSKPINAVIMAITGFFIGGPSNMISSAISADLGRQDLVRGSSEALATVTGIVDGTGSIGAAVGQYLVSLIQENLGWMWVFYFFILMASSTILFISPLIVREIRLLLHERRLRMLAE.

A helical transmembrane segment spans residues 20–40; the sequence is CTHHHIVVFLLTFFSYSLLHA. N-linked (GlcNAc...) asparagine glycosylation occurs at Asn-62. A run of 5 helical transmembrane segments spans residues 87–107, 119–139, 153–173, 183–203, and 214–234; these read TLFL…GLFV, WVLS…GTLT, LWVV…AVMG, FVFG…AFLA, and AFLV…CGLL. Residue Asn-273 is glycosylated (N-linked (GlcNAc...) asparagine). The next 6 helical transmembrane spans lie at 298–320, 340–360, 364–384, 393–413, 435–455, and 459–479; these read GVVL…FFWL, IWYD…SDVL, APVL…YSRS, VIMA…SSAI, GIVD…VSLI, and LGWM…ILFI.

Belongs to the major facilitator superfamily. Organophosphate:Pi antiporter (OPA) (TC 2.A.1.4) family.

It localises to the endoplasmic reticulum membrane. Its subcellular location is the lysosome membrane. Functionally, unlike the other SLC37 members, seems to lack glucose-6-phosphate antiporter activity. The protein is Sugar phosphate exchanger 3 (SLC37A3) of Gallus gallus (Chicken).